The primary structure comprises 652 residues: Chaperone protein HtpG (652 aa).

Residues 1–351 (MTEHVEQLEF…AQDLSLNVSR (351 aa)) are a; substrate-binding. Positions 352-568 (EILQQDRQIQ…VFDFTPMLER (217 aa)) are b. Positions 569 to 652 (MYRASGQPVP…ILTDRLTRTL (84 aa)) are c.

Belongs to the heat shock protein 90 family. Homodimer.

The protein localises to the cytoplasm. Functionally, molecular chaperone. Has ATPase activity. This chain is Chaperone protein HtpG, found in Nocardia farcinica (strain IFM 10152).